The sequence spans 830 residues: Septin and tuftelin-interacting protein 1 homolog (830 aa).

Residues 1–17 show a composition bias toward acidic residues; sequence MEDDDGRESFEINDMDL. Disordered regions lie at residues 1–122 and 196–244; these read MEDD…PKQN and AYGK…KGSW. A G-patch domain is found at 153-199; it reads NSNKIMKMMQAMGYKPGEGLGAQGQGIVEPVQAQLRKGRGAVGAYGK.

Belongs to the TFP11/STIP family. In terms of assembly, identified in the spliceosome C complex. Can assemble into large rod-like polymers. In terms of tissue distribution, detected in muscle cells from body, pharynx and vulva, in neurons from head and tail, in pharyngeal gland and in tail hypodermal cells.

It localises to the nucleus. Its function is as follows. May be involved in pre-mRNA splicing. Required for embryonic development and survival. The chain is Septin and tuftelin-interacting protein 1 homolog (stip-1) from Caenorhabditis elegans.